The chain runs to 79 residues: Gas vesicle protein A2 (79 aa).

Residues 9 to 19 (LAEVLDRVLDK) form an alpha helix 1 region. Residues 23 to 31 (VDVWARISL) are beta-strand 1. The tract at residues 32–34 (VGI) is beta turn. The beta-strand 2 stretch occupies residues 35-43 (EILTVEARV). The interval 48–67 (VDTFLHYAEEIAKIEQAELT) is alpha helix 2.

The protein belongs to the gas vesicle GvpA family. The gas vesicle shell is 2 nm thick and consists of a single layer of this protein. It forms helical ribs nearly perpendicular to the long axis of the vesicle.

The protein resides in the gas vesicle shell. Gas vesicles are hollow, gas filled proteinaceous nanostructures found in several microbial planktonic microorganisms. They allow positioning of halobacteria at the optimal depth for growth in the poorly aerated shallow brine pools of their habitat. GvpA forms the gas vesicle shell. This protein can replace the p-gvpA gene in the p-vac locus and increases the critical collapse pressure (CCP) of hybrid gas vesicles from 0.66 MPa to 0.90 MPa. In stationary phase gas vesicles about 30 times more GvpA1 is found than GvpA2. In terms of biological role, expression of 2 c-vac DNA fragments containing 2 divergently transcribed regions (gvpE-gvpF-gvpG-gvpH-gvpI-gvpJ-gvpK-gvpL-gvpM and gvpA-gvpC-gvpN-gvpO) allows H.volcanii to produce gas vesicles. All site-directed mutagenesis is tested in H.volcanii. The chain is Gas vesicle protein A2 from Halobacterium salinarum (strain ATCC 700922 / JCM 11081 / NRC-1) (Halobacterium halobium).